We begin with the raw amino-acid sequence, 1046 residues long: UDP-N-acetylglucosamine--peptide N-acetylglucosaminyltransferase 110 kDa subunit (1046 aa).

N-acetylalanine is present on A2. 2 positions are modified to phosphoserine; by GSK3-beta; alternate: S3 and S4. 2 O-linked (GlcNAc) serine; alternate glycosylation sites follow: S3 and S4. S20 bears the Phosphoserine mark. TPR repeat units lie at residues 21–54 (FQGL…EPDN), 89–122 (AEAY…KPDF), 123–156 (IDGY…NPDL), 157–190 (YCVR…QPNF), 191–224 (AVAW…DPNF), 225–258 (LDAY…SPNH), 259–292 (AVVH…QPHF), 293–326 (PDAY…CPTH), 327–360 (ADSL…FPEF), 361–394 (AAAH…SPTF), 395–428 (ADAY…NPAF), and 429–462 (ADAH…KPDF). S399 carries O-linked (GlcNAc) serine; by autocatalysis glycosylation. T454 is subject to Phosphothreonine. A TPR 13; truncated repeat occupies 463–473 (PDAYCNLAHCL). Positions 464-466 (DAY) match the DFP motif motif. The Nuclear localization signal signature appears at 487 to 503 (KKLVSIVADQLEKNRLP). Catalysis depends on H508, which acts as the Proton acceptor. Residues Q849, K852, 906 to 908 (APK), 911 to 914 (HVRR), 930 to 932 (HTT), and D935 contribute to the UDP site. The residue at position 989 (Y989) is a Phosphotyrosine. A required for phosphatidylinositol 3,4,5-triphosphate binding region spans residues 991-1010 (KKIRGKVWKQRISSPLFNTK).

Belongs to the glycosyltransferase 41 family. O-GlcNAc transferase subfamily. In terms of assembly, monomer; may exist in different oligomerization states in cells. Homotrimer, oligomerizes via TPR repeats 6 and 7. Trimerization is not necessary for activity in vitro, however it increases affinity for UDP-GlcNAc. Component of a THAP1/THAP3-HCFC1-OGT complex. Component of the NSL complex at least composed of MOF/KAT8, KANSL1, KANSL2, KANSL3, MCRS1, PHF20, OGT1/OGT, WDR5 and HCFC1. Found in a complex with KIF5B, RHOT1, RHOT2 and TRAK1. Found in a complex composed of at least SINHCAF, SIN3A, HDAC1, SAP30, RBBP4, OGT and TET1. Component of a complex composed of KMT2E/MLL5, OGT and USP7; the complex stabilizes KMT2E/MLL5, preventing KMT2E/MLL5 ubiquitination and proteasomal-mediated degradation. Interacts (via TPRs 1-6) with SIN3A; the interaction mediates transcriptional repression in parallel with histone deacetylase. Interacts (via TPR 5-6) with TET1, TET2 and TET3. Interacts (via TPR repeats 6 and 7) with ATXN10. Interacts with NSD2. Interacts with PROSER1; this interaction mediates TET2 O-GlcNAcylation and stability by promoting the interaction between OGT and TET2. Post-translationally, ubiquitinated by the SCF(FBXO31) complex, leading to its proteasomal degradation. In terms of processing, phosphorylation on Ser-3 or Ser-4 by GSK3-beta positively regulates its activity. Phosphorylation at Thr-454 by AMPK promotes nuclear localization. Glycosylated via autocatalysis; O-GlcNAcylation at Ser-399 promotes nuclear localization.

It is found in the nucleus. It localises to the cytoplasm. It carries out the reaction L-seryl-[protein] + UDP-N-acetyl-alpha-D-glucosamine = 3-O-(N-acetyl-beta-D-glucosaminyl)-L-seryl-[protein] + UDP + H(+). The enzyme catalyses L-threonyl-[protein] + UDP-N-acetyl-alpha-D-glucosamine = 3-O-(N-acetyl-beta-D-glucosaminyl)-L-threonyl-[protein] + UDP + H(+). Its pathway is protein modification; protein glycosylation. With respect to regulation, inhibited by UDP. Its function is as follows. Catalyzes the transfer of a single N-acetylglucosamine from UDP-GlcNAc to a serine or threonine residue in cytoplasmic and nuclear proteins resulting in their modification with a beta-linked N-acetylglucosamine (O-GlcNAc). Glycosylates a large and diverse number of proteins including histone H2B, AKT1, AMPK, ATG4B, CAPRIN1, EZH2, FNIP1, GSDMD, KRT7, LMNA, LMNB1, LMNB2, RPTOR, HOXA1, PFKL, KMT2E/MLL5, MAPT/TAU, TET2, RBL2, RET, NOD2 and HCFC1. Can regulate their cellular processes via cross-talk between glycosylation and phosphorylation or by affecting proteolytic processing. Involved in insulin resistance in muscle and adipocyte cells via glycosylating insulin signaling components and inhibiting the 'Thr-308' phosphorylation of AKT1, enhancing IRS1 phosphorylation and attenuating insulin signaling. Involved in glycolysis regulation by mediating glycosylation of 6-phosphofructokinase PFKL, inhibiting its activity. Plays a key role in chromatin structure by mediating O-GlcNAcylation of 'Ser-112' of histone H2B: recruited to CpG-rich transcription start sites of active genes via its interaction with TET proteins (TET1, TET2 or TET3). As part of the NSL complex indirectly involved in acetylation of nucleosomal histone H4 on several lysine residues. O-GlcNAcylation of 'Ser-75' of EZH2 increases its stability, and facilitating the formation of H3K27me3 by the PRC2/EED-EZH2 complex. Stabilizes KMT2E/MLL5 by mediating its glycosylation, thereby preventing KMT2E/MLL5 ubiquitination. Regulates circadian oscillation of the clock genes and glucose homeostasis in the liver. Stabilizes clock proteins BMAL1 and CLOCK through O-glycosylation, which prevents their ubiquitination and subsequent degradation. Promotes the CLOCK-BMAL1-mediated transcription of genes in the negative loop of the circadian clock such as PER1/2 and CRY1/2. O-glycosylates HCFC1 and regulates its proteolytic processing and transcriptional activity. Component of a THAP1/THAP3-HCFC1-OGT complex that is required for the regulation of the transcriptional activity of RRM1. Regulates mitochondrial motility in neurons by mediating glycosylation of TRAK1. Promotes autophagy by mediating O-glycosylation of ATG4B. Acts as a regulator of mTORC1 signaling by mediating O-glycosylation of RPTOR and FNIP1: O-GlcNAcylation of RPTOR in response to glucose sufficiency promotes activation of the mTORC1 complex. Catalyzes the transfer of a single N-acetylglucosamine from UDP-GlcNAc to a serine or threonine residue. Acts on cytoplasmic and nuclear proteins resulting in their modification with a beta-linked N-acetylglucosamine (O-GlcNAc). Glycosylates a large and diverse number of proteins including histone H2B, AKT1, ATG4B, EZH2, PFKL, KMT2E/MLL5, MAPT/TAU, NOD2 and HCFC1. Can regulate their cellular processes via cross-talk between glycosylation and phosphorylation or by affecting proteolytic processing. Probably by glycosylating KMT2E/MLL5, stabilizes KMT2E/MLL5 by preventing its ubiquitination. Involved in insulin resistance in muscle and adipocyte cells via glycosylating insulin signaling components and inhibiting the 'Thr-308' phosphorylation of AKT1, enhancing IRS1 phosphorylation and attenuating insulin signaling. Involved in glycolysis regulation by mediating glycosylation of 6-phosphofructokinase PFKL, inhibiting its activity. Component of a THAP1/THAP3-HCFC1-OGT complex that is required for the regulation of the transcriptional activity of RRM1. Plays a key role in chromatin structure by mediating O-GlcNAcylation of 'Ser-112' of histone H2B: recruited to CpG-rich transcription start sites of active genes via its interaction with TET proteins (TET1, TET2 or TET3). As part of the NSL complex indirectly involved in acetylation of nucleosomal histone H4 on several lysine residues. O-GlcNAcylation of 'Ser-75' of EZH2 increases its stability, and facilitating the formation of H3K27me3 by the PRC2/EED-EZH2 complex. Regulates circadian oscillation of the clock genes and glucose homeostasis in the liver. Stabilizes clock proteins BMAL1 and CLOCK through O-glycosylation, which prevents their ubiquitination and subsequent degradation. Promotes the CLOCK-BMAL1-mediated transcription of genes in the negative loop of the circadian clock such as PER1/2 and CRY1/2. O-glycosylates HCFC1 and regulates its proteolytic processing and transcriptional activity. Regulates mitochondrial motility in neurons by mediating glycosylation of TRAK1. Glycosylates HOXA1. O-glycosylates FNIP1. Promotes autophagy by mediating O-glycosylation of ATG4B. The polypeptide is UDP-N-acetylglucosamine--peptide N-acetylglucosaminyltransferase 110 kDa subunit (OGT) (Oryctolagus cuniculus (Rabbit)).